The chain runs to 239 residues: Bradykinin-potentiating and C-type natriuretic peptides (239 aa).

The signal sequence occupies residues 1-23 (MFVSRLAASGLLLLALLAVSLDG). 2 consecutive propeptides follow at residues 24–33 (KPVQQWSHKG) and 43–49 (LVVQQWS). Residue Gln50 is modified to Pyrrolidone carboxylic acid. Positions 62 to 64 (VVV) are excised as a propeptide. Gln65 is subject to Pyrrolidone carboxylic acid. Residues 76-82 (LVVQQWS) constitute a propeptide that is removed on maturation. At Gln83 the chain carries Pyrrolidone carboxylic acid. The propeptide occupies 95 to 97 (LVV). Gln98 carries the post-translational modification Pyrrolidone carboxylic acid. 2 consecutive propeptides follow at residues 109-136 (LLKP…AALD) and 148-217 (GSKA…LAKK). Residues 132–205 (EAALDTPPAG…HHAVGGGGGG (74 aa)) form a disordered region. Positions 161 to 171 (SKGASATSAAS) are enriched in low complexity. Over residues 173 to 183 (PMRDLRTDGKQ) the composition is skewed to basic and acidic residues. The cysteines at positions 223 and 239 are disulfide-linked.

The protein in the N-terminal section; belongs to the bradykinin-potentiating peptide family. This sequence in the central section; belongs to the bradykinin inhibitor peptide family. In the C-terminal section; belongs to the natriuretic peptide family. In terms of tissue distribution, expressed by the venom gland.

It is found in the secreted. Bradykinin-potentiating peptides both inhibit the activity of the angiotensin-converting enzyme (ACE) and enhances the action of bradykinin by inhibiting the peptidases that inactivate it. They act as indirect hypotensive agent. In terms of biological role, inhibits angiotensin-converting enzyme (ACE) activity (IC(50)=4.25 uM), preventing the release of angiotensin and thus indirectly contributing to hypotension. In vivo, induce hypotensive response in both normotensive and hypertensive rats. Functionally, antagonizes the vasodilatory actions of bradykinin at the B2 bradykinin receptor (BDKRB2). Its function is as follows. has a vasorelaxant activity in rat aortic strips and a diuretic potency in anesthetized rats. May act by activating natriuretic receptors (NPR1 and/or NPR2). The sequence is that of Bradykinin-potentiating and C-type natriuretic peptides from Lachesis muta muta (Bushmaster).